We begin with the raw amino-acid sequence, 463 residues long: Glycine--tRNA ligase (463 aa).

The substrate site is built by arginine 98 and glutamate 174. ATP-binding positions include 206–208 (RNE), 216–221 (FRTREF), 290–291 (EL), and 334–337 (GADR). 221-225 (FEQME) contributes to the substrate binding site. Residue 330-334 (EPSLG) participates in substrate binding.

This sequence belongs to the class-II aminoacyl-tRNA synthetase family. Homodimer.

It is found in the cytoplasm. It carries out the reaction tRNA(Gly) + glycine + ATP = glycyl-tRNA(Gly) + AMP + diphosphate. Its function is as follows. Catalyzes the attachment of glycine to tRNA(Gly). The chain is Glycine--tRNA ligase from Staphylococcus haemolyticus (strain JCSC1435).